We begin with the raw amino-acid sequence, 377 residues long: Palmitoyltransferase ZDHHC16 (377 aa).

The Cytoplasmic portion of the chain corresponds to 1–77 (MRGQRSLLLG…VYWLVDNVIR (77 aa)). Residues 78–98 (WFGVVFVVLVIVLTGSIVAIA) traverse the membrane as a helical segment. Topologically, residues 99–116 (YLCVLPLILRTYSVPRLC) are lumenal. A helical membrane pass occupies residues 117–137 (WHFFYSHWNLILIVFHYYQAI). Residues 138–198 (TTPPGYPPQG…NNCVGHYNHR (61 aa)) are Cytoplasmic-facing. In terms of domain architecture, DHHC spans 155-205 (SICKKCIYPKPARTHHCSICNRCVLKMDHHCPWLNNCVGHYNHRYFFSFCF). Cysteine 185 acts as the S-palmitoyl cysteine intermediate in catalysis. Residues 199–219 (YFFSFCFFMTLGCVYCSYGSW) form a helical membrane-spanning segment. Over 220 to 266 (DLFREAYAAIEKMKQLDKNKLQAVANQTYHQTPPPIFSFRERMTHKS) the chain is Lumenal. A helical membrane pass occupies residues 267–287 (LVYLWFLCSSVALALGALTVW). The Cytoplasmic segment spans residues 288–377 (HAVLISRGET…TAHSASVMAV (90 aa)).

The protein belongs to the DHHC palmitoyltransferase family. In terms of assembly, interacts with ABL1. Interacts with COPS5/JAB1.

The protein localises to the endoplasmic reticulum membrane. It catalyses the reaction L-cysteinyl-[protein] + hexadecanoyl-CoA = S-hexadecanoyl-L-cysteinyl-[protein] + CoA. In terms of biological role, palmitoyl acyltransferase that mediates palmitoylation of proteins such as PLN and ZDHHC6. Required during embryonic heart development and cardiac function, possibly by mediating palmitoylation of PLN, thereby affecting PLN phosphorylation and homooligomerization. Also required for eye development. Palmitoylates ZDHHC6, affecting the quaternary assembly of ZDHHC6, its localization, stability and function. May play a role in DNA damage response. May be involved in apoptosis regulation. Involved in the proliferation of neural stem cells by regulating the FGF/ERK pathway. The polypeptide is Palmitoyltransferase ZDHHC16 (Macaca fascicularis (Crab-eating macaque)).